We begin with the raw amino-acid sequence, 435 residues long: Cytochrome c oxidase subunit 3 (435 aa).

Transmembrane regions (helical) follow at residues 70–90, 96–116, 132–152, 176–196, 325–345, 360–380, and 412–432; these read VAPL…FGVI, LLIA…SIIF, LVMG…SFFW, VYSY…SGAI, LYFT…EYFF, FLLT…IGII, and LFYW…IYWW.

Belongs to the cytochrome c oxidase subunit 3 family. Component of the cytochrome c oxidase (complex IV, CIV), a multisubunit enzyme composed of a catalytic core of 3 subunits and several supernumerary subunits. The complex exists as a monomer or a dimer and forms supercomplexes (SCs) in the inner mitochondrial membrane with ubiquinol-cytochrome c oxidoreductase (cytochrome b-c1 complex, complex III, CIII).

The protein resides in the mitochondrion inner membrane. It carries out the reaction 4 Fe(II)-[cytochrome c] + O2 + 8 H(+)(in) = 4 Fe(III)-[cytochrome c] + 2 H2O + 4 H(+)(out). Its function is as follows. Component of the cytochrome c oxidase, the last enzyme in the mitochondrial electron transport chain which drives oxidative phosphorylation. The respiratory chain contains 3 multisubunit complexes succinate dehydrogenase (complex II, CII), ubiquinol-cytochrome c oxidoreductase (cytochrome b-c1 complex, complex III, CIII) and cytochrome c oxidase (complex IV, CIV), that cooperate to transfer electrons derived from NADH and succinate to molecular oxygen, creating an electrochemical gradient over the inner membrane that drives transmembrane transport and the ATP synthase. Cytochrome c oxidase is the component of the respiratory chain that catalyzes the reduction of oxygen to water. Electrons originating from reduced cytochrome c in the intermembrane space (IMS) are transferred via the dinuclear copper A center (CU(A)) of subunit 2 and heme A of subunit 1 to the active site in subunit 1, a binuclear center (BNC) formed by heme A3 and copper B (CU(B)). The BNC reduces molecular oxygen to 2 water molecules using 4 electrons from cytochrome c in the IMS and 4 protons from the mitochondrial matrix. This Dictyostelium discoideum (Social amoeba) protein is Cytochrome c oxidase subunit 3 (cox3).